The primary structure comprises 182 residues: Transmembrane and coiled-coil domain-containing protein 2 (182 aa).

Helical transmembrane passes span 10–30 and 50–70; these read IIIDYLSLSSIWNYLQATLLG and VQVILGISFLILLGVGMYALW. The stretch at 122–149 forms a coiled coil; sequence GLQEKILKKLQTVENKVKDLEGMIISQK.

The protein resides in the membrane. This Bos taurus (Bovine) protein is Transmembrane and coiled-coil domain-containing protein 2 (TMCO2).